Here is a 174-residue protein sequence, read N- to C-terminus: uncharacterized protein (174 aa).

The interval 153-174 is disordered; that stretch reads RSGNHSAGNVHPASPMIKVQGG.

This is an uncharacterized protein from Sinorhizobium fredii (strain NBRC 101917 / NGR234).